The primary structure comprises 613 residues: Cysteine--tRNA ligase (613 aa).

The tract at residues 1–130 (MSAGAGTPRR…TRGGVARSGN (130 aa)) is disordered. 6 consecutive repeat copies span residues 36-49 (PTRG…RPGV), 50-63 (PTRG…RLGV), 64-77 (PARG…RPGV), 78-91 (PARE…RPGV), 92-105 (PTRG…RLGV), and 106-119 (PARG…RPGV). The segment at 36 to 119 (PTRGDKKRAR…DKKRARRPGV (84 aa)) is 6 X 14 AA tandem repeats of P-[TA]-R-G-D-K-K-R-A-[RP]-R-[PL]-G-V. The interval 148-613 (VTIRLYDTSA…QGPRWSLGSR (466 aa)) is cysteinyl-tRNA synthetase. Cys-176 serves as a coordination point for Zn(2+). The 'HIGH' region signature appears at 178–188 (ATVQAAPHIGH). Cys-355, His-380, and Glu-384 together coordinate Zn(2+). Positions 411–415 (KMSKS) match the 'KMSKS' region motif. Lys-414 is an ATP binding site.

Belongs to the class-I aminoacyl-tRNA synthetase family. As to quaternary structure, monomer. Zn(2+) is required as a cofactor.

It localises to the cytoplasm. The enzyme catalyses tRNA(Cys) + L-cysteine + ATP = L-cysteinyl-tRNA(Cys) + AMP + diphosphate. The sequence is that of Cysteine--tRNA ligase from Streptomyces coelicolor (strain ATCC BAA-471 / A3(2) / M145).